The chain runs to 151 residues: 3-dehydroquinate dehydratase (151 aa).

Y24 acts as the Proton acceptor in catalysis. Substrate contacts are provided by N76, H82, and D89. The active-site Proton donor is the H102. Substrate-binding positions include V103–S104 and R113.

This sequence belongs to the type-II 3-dehydroquinase family. Homododecamer.

The enzyme catalyses 3-dehydroquinate = 3-dehydroshikimate + H2O. It functions in the pathway metabolic intermediate biosynthesis; chorismate biosynthesis; chorismate from D-erythrose 4-phosphate and phosphoenolpyruvate: step 3/7. Catalyzes a trans-dehydration via an enolate intermediate. This is 3-dehydroquinate dehydratase from Afipia carboxidovorans (strain ATCC 49405 / DSM 1227 / KCTC 32145 / OM5) (Oligotropha carboxidovorans).